Reading from the N-terminus, the 280-residue chain is PsbP domain-containing protein 7, chloroplastic (280 aa).

The N-terminal 36 residues, 1–36, are a transit peptide targeting the chloroplast; the sequence is MSLKPYFSLLYSSPTNVKLSNFLIAQQPSGDLKTTP.

Belongs to the PsbP family.

The protein localises to the plastid. Its subcellular location is the chloroplast. This is PsbP domain-containing protein 7, chloroplastic (PPD7) from Arabidopsis thaliana (Mouse-ear cress).